A 183-amino-acid chain; its full sequence is Translation initiation factor IF-3 (183 aa).

This sequence belongs to the IF-3 family. As to quaternary structure, monomer.

The protein resides in the cytoplasm. Its function is as follows. IF-3 binds to the 30S ribosomal subunit and shifts the equilibrium between 70S ribosomes and their 50S and 30S subunits in favor of the free subunits, thus enhancing the availability of 30S subunits on which protein synthesis initiation begins. The chain is Translation initiation factor IF-3 from Yersinia pseudotuberculosis serotype O:1b (strain IP 31758).